The following is a 160-amino-acid chain: MVNEFVKKLREDIWQLAEPVIASEGLELVEVECLRMKTRWLVRIYMDREGGVTLDDCSEISNQLGDVLDVHDLPPDPYTLEVSSPGLDRPLVRDKDFVRYQGCEVSIRLEQKVDGIRNFRGRLLEYVEEDGRKILVIEMASKLYRIPRDLIVKANLVYRF.

It belongs to the RimP family.

The protein localises to the cytoplasm. Its function is as follows. Required for maturation of 30S ribosomal subunits. This is Ribosome maturation factor RimP from Syntrophus aciditrophicus (strain SB).